The primary structure comprises 82 residues: Small ribosomal subunit protein bS18 (82 aa).

The protein belongs to the bacterial ribosomal protein bS18 family. Part of the 30S ribosomal subunit. Forms a tight heterodimer with protein bS6.

In terms of biological role, binds as a heterodimer with protein bS6 to the central domain of the 16S rRNA, where it helps stabilize the platform of the 30S subunit. This is Small ribosomal subunit protein bS18 from Chlamydia caviae (strain ATCC VR-813 / DSM 19441 / 03DC25 / GPIC) (Chlamydophila caviae).